We begin with the raw amino-acid sequence, 738 residues long: uncharacterized protein (738 aa).

Composition is skewed to polar residues over residues 1-34 (MSSSSKDSSFQVETPVQNILETSTNSELQDQVSS), 140-169 (TSSDFQSKDSLSTTQPSVSGGNGSTSQSPP), and 177-197 (KPFSISNEPVEQETENSSTKD). Disordered stretches follow at residues 1–51 (MSSS…AASI) and 140–197 (TSSD…STKD). The region spanning 363–434 (SRLFLGHLNT…QKLHLEISKI (72 aa)) is the RRM domain. Residues 466-487 (YPTSSRKRTRSPLMSKGKSYDR) are disordered.

This is an uncharacterized protein from Schizosaccharomyces pombe (strain 972 / ATCC 24843) (Fission yeast).